The chain runs to 559 residues: Polypeptide N-acetylgalactosaminyltransferase 1 (559 aa).

Over methionine 1 to lysine 8 the chain is Cytoplasmic. Residues valine 9–phenylalanine 28 traverse the membrane as a helical; Signal-anchor for type II membrane protein segment. Residues serine 29–phenylalanine 559 are Lumenal-facing. Asparagine 95 carries an N-linked (GlcNAc...) asparagine glycan. Disulfide bonds link cysteine 106–cysteine 339, cysteine 330–cysteine 408, cysteine 442–cysteine 459, cysteine 482–cysteine 497, and cysteine 523–cysteine 540. The tract at residues leucine 115–arginine 225 is catalytic subdomain A. Substrate is bound by residues aspartate 156 and arginine 186. Mn(2+)-binding residues include aspartate 209 and histidine 211. Positions proline 285–arginine 347 are catalytic subdomain B. Tryptophan 316 serves as a coordination point for substrate. Histidine 344 provides a ligand contact to Mn(2+). Residues arginine 347 and tyrosine 352 each contribute to the substrate site. The Ricin B-type lectin domain occupies phenylalanine 429–arginine 551. N-linked (GlcNAc...) asparagine glycosylation occurs at asparagine 552.

It belongs to the glycosyltransferase 2 family. GalNAc-T subfamily. It depends on Mn(2+) as a cofactor. As to expression, heart, brain, spleen, liver, skeletal muscle and kidney.

The protein resides in the golgi apparatus. It is found in the golgi stack membrane. It localises to the secreted. The enzyme catalyses L-seryl-[protein] + UDP-N-acetyl-alpha-D-galactosamine = a 3-O-[N-acetyl-alpha-D-galactosaminyl]-L-seryl-[protein] + UDP + H(+). It catalyses the reaction L-threonyl-[protein] + UDP-N-acetyl-alpha-D-galactosamine = a 3-O-[N-acetyl-alpha-D-galactosaminyl]-L-threonyl-[protein] + UDP + H(+). It functions in the pathway protein modification; protein glycosylation. In terms of biological role, catalyzes the initial reaction in O-linked oligosaccharide biosynthesis, the transfer of an N-acetyl-D-galactosamine residue to a serine or threonine residue on the protein receptor. Has a broad spectrum of substrates such as apomucin-, MUC5AC-, MUC1- and MUC2-derived peptides. The sequence is that of Polypeptide N-acetylgalactosaminyltransferase 1 from Rattus norvegicus (Rat).